Consider the following 229-residue polypeptide: Uracil-DNA glycosylase (229 aa).

The active-site Proton acceptor is the D70.

This sequence belongs to the uracil-DNA glycosylase (UDG) superfamily. UNG family.

The protein localises to the cytoplasm. It carries out the reaction Hydrolyzes single-stranded DNA or mismatched double-stranded DNA and polynucleotides, releasing free uracil.. Its function is as follows. Excises uracil residues from the DNA which can arise as a result of misincorporation of dUMP residues by DNA polymerase or due to deamination of cytosine. The sequence is that of Uracil-DNA glycosylase from Chlamydia trachomatis serovar A (strain ATCC VR-571B / DSM 19440 / HAR-13).